The chain runs to 249 residues: RING finger protein 223 (249 aa).

The segment at 1–44 (MSSGQQVWHTAVPPPRRSSSIASMPRSPSSAGSPRSPGTPGSER) is disordered. Positions 17 to 44 (RSSSIASMPRSPSSAGSPRSPGTPGSER) are enriched in low complexity. The segment at 51–102 (CSICFSGYDNIFKTPKELSCTHVFCLECLARLAAAQPVGRPGGEAVPCPFCR) adopts an RING-type zinc-finger fold. Residues 199 to 219 (LVSALLLMLFCVALWPVQCAL) form a helical membrane-spanning segment. Residues 230–249 (PPRPPATSTAASPLGPLTDN) are disordered. The span at 235 to 249 (ATSTAASPLGPLTDN) shows a compositional bias: low complexity.

It is found in the membrane. In Homo sapiens (Human), this protein is RING finger protein 223 (RNF223).